The chain runs to 294 residues: Cytidine deaminase (294 aa).

CMP/dCMP-type deaminase domains follow at residues 48–168 (DEDA…FGPK) and 186–294 (LTGD…VLLA). 89 to 91 (NME) contributes to the substrate binding site. His-102 is a Zn(2+) binding site. Glu-104 (proton donor) is an active-site residue. Zn(2+)-binding residues include Cys-129 and Cys-132.

This sequence belongs to the cytidine and deoxycytidylate deaminase family. As to quaternary structure, homodimer. Zn(2+) serves as cofactor.

The catalysed reaction is cytidine + H2O + H(+) = uridine + NH4(+). It carries out the reaction 2'-deoxycytidine + H2O + H(+) = 2'-deoxyuridine + NH4(+). In terms of biological role, this enzyme scavenges exogenous and endogenous cytidine and 2'-deoxycytidine for UMP synthesis. This chain is Cytidine deaminase, found in Escherichia coli (strain K12).